The chain runs to 165 residues: Phosphopantetheine adenylyltransferase (165 aa).

Position 11 (threonine 11) interacts with substrate. ATP-binding positions include 11–12 (TF) and histidine 19. Lysine 43, valine 75, and arginine 89 together coordinate substrate. ATP is bound by residues 90–92 (GLR), glutamate 100, and 125–131 (YQFISST).

Belongs to the bacterial CoaD family. In terms of assembly, homohexamer. Mg(2+) serves as cofactor.

The protein localises to the cytoplasm. The enzyme catalyses (R)-4'-phosphopantetheine + ATP + H(+) = 3'-dephospho-CoA + diphosphate. The protein operates within cofactor biosynthesis; coenzyme A biosynthesis; CoA from (R)-pantothenate: step 4/5. Functionally, reversibly transfers an adenylyl group from ATP to 4'-phosphopantetheine, yielding dephospho-CoA (dPCoA) and pyrophosphate. The sequence is that of Phosphopantetheine adenylyltransferase from Acidovorax ebreus (strain TPSY) (Diaphorobacter sp. (strain TPSY)).